Reading from the N-terminus, the 289-residue chain is Pantothenate synthetase (289 aa).

30 to 37 (MGYLHKGH) is a binding site for ATP. The active-site Proton donor is H37. A (R)-pantoate-binding site is contributed by Q61. Position 61 (Q61) interacts with beta-alanine. 147-150 (GEKD) is an ATP binding site. Q153 is a (R)-pantoate binding site. ATP-binding positions include V176 and 184-187 (CSSR).

The protein belongs to the pantothenate synthetase family. In terms of assembly, homodimer.

It is found in the cytoplasm. The enzyme catalyses (R)-pantoate + beta-alanine + ATP = (R)-pantothenate + AMP + diphosphate + H(+). Its pathway is cofactor biosynthesis; (R)-pantothenate biosynthesis; (R)-pantothenate from (R)-pantoate and beta-alanine: step 1/1. Functionally, catalyzes the condensation of pantoate with beta-alanine in an ATP-dependent reaction via a pantoyl-adenylate intermediate. The protein is Pantothenate synthetase of Brucella anthropi (strain ATCC 49188 / DSM 6882 / CCUG 24695 / JCM 21032 / LMG 3331 / NBRC 15819 / NCTC 12168 / Alc 37) (Ochrobactrum anthropi).